Reading from the N-terminus, the 298-residue chain is ATP phosphoribosyltransferase (298 aa).

The protein belongs to the ATP phosphoribosyltransferase family. Long subfamily. It depends on Mg(2+) as a cofactor.

Its subcellular location is the cytoplasm. It catalyses the reaction 1-(5-phospho-beta-D-ribosyl)-ATP + diphosphate = 5-phospho-alpha-D-ribose 1-diphosphate + ATP. It functions in the pathway amino-acid biosynthesis; L-histidine biosynthesis; L-histidine from 5-phospho-alpha-D-ribose 1-diphosphate: step 1/9. With respect to regulation, feedback inhibited by histidine. Catalyzes the condensation of ATP and 5-phosphoribose 1-diphosphate to form N'-(5'-phosphoribosyl)-ATP (PR-ATP). Has a crucial role in the pathway because the rate of histidine biosynthesis seems to be controlled primarily by regulation of HisG enzymatic activity. The sequence is that of ATP phosphoribosyltransferase from Aliivibrio fischeri (strain ATCC 700601 / ES114) (Vibrio fischeri).